Here is a 371-residue protein sequence, read N- to C-terminus: D-alanine--D-alanine ligase (371 aa).

The ATP-grasp domain maps to 154 to 361; sequence KKLLVAEGLP…YPTLLAAMVD (208 aa). 182–237 is an ATP binding site; sequence RERLGLPVFVKPARGGSSIGVSRVSDWAELPAAIEAARRHDPKVIVEAGIAGRELE. Residues Asp-316, Glu-328, and Asn-330 each contribute to the Mg(2+) site.

It belongs to the D-alanine--D-alanine ligase family. Mg(2+) serves as cofactor. It depends on Mn(2+) as a cofactor.

The protein localises to the cytoplasm. It catalyses the reaction 2 D-alanine + ATP = D-alanyl-D-alanine + ADP + phosphate + H(+). The protein operates within cell wall biogenesis; peptidoglycan biosynthesis. Cell wall formation. In Mycobacterium sp. (strain KMS), this protein is D-alanine--D-alanine ligase.